Consider the following 485-residue polypeptide: Glucagon receptor (485 aa).

The first 26 residues, 1–26 (MPLTQLHCPHLLLLLLVLSCLPEAPS), serve as a signal peptide directing secretion. Over 27–137 (AQVMDFLFEK…EIEVQKGVAK (111 aa)) the chain is Extracellular. 3 cysteine pairs are disulfide-bonded: Cys-44-Cys-68, Cys-59-Cys-101, and Cys-82-Cys-122. Asn-47, Asn-60, Asn-75, Asn-79, and Asn-118 each carry an N-linked (GlcNAc...) asparagine glycan. The chain crosses the membrane as a helical span at residues 138–162 (MYSSQQVMYTVGYSLSLGALLLALV). Over 163–174 (ILLGLRKLHCTR) the chain is Cytoplasmic. The chain crosses the membrane as a helical span at residues 175–199 (NYIHGNLFASFVLKAGSVLVIDWLL). At 200–226 (KTRYSQKIGDDLSVSVWLSDGAMAGCR) the chain is on the extracellular side. Cys-225 and Cys-295 are joined by a disulfide. The helical transmembrane segment at 227-250 (VATVIMQYGIIANYCWLLVEGVYL) threads the bilayer. Topologically, residues 251–264 (YSLLSLATFSERSF) are cytoplasmic. Residues 265-286 (FSLYLGIGWGAPLLFVIPWVVV) form a helical membrane-spanning segment. At 287–304 (KCLFENVQCWTSNDNMGF) the chain is on the extracellular side. The chain crosses the membrane as a helical span at residues 305-327 (WWILRIPVFLALLINFFIFVHII). Residues 328–351 (HLLVAKLRAHQMHYADYKFRLARS) are Cytoplasmic-facing. The important for allosteric inhibitor binding stretch occupies residues 351–354 (STLT). A helical membrane pass occupies residues 352-370 (TLTLIPLLGVHEVVFAFVT). At 371 to 382 (DEHAQGTLRSTK) the chain is on the extracellular side. Residues 383–403 (LFFDLFLSSFQGLLVAVLYCF) form a helical membrane-spanning segment. At 404-485 (LNKEVQAELM…SLPRLADSPT (82 aa)) the chain is on the cytoplasmic side. Residues 457–475 (AGSSSGTGCVPSMETSLAS) show a composition bias toward polar residues. Residues 457-485 (AGSSSGTGCVPSMETSLASSLPRLADSPT) form a disordered region. 2 positions are modified to phosphoserine: Ser-460 and Ser-476.

It belongs to the G-protein coupled receptor 2 family. Post-translationally, ligand-binding promotes phosphorylation of serine residues in the C-terminal cytoplasmic domain. Phosphorylation is important for receptor endocytosis after ligand-binding. In terms of tissue distribution, expressed predominantly in liver, kidney, adrenal, lung and stomach, while lower levels of expression are detected in brown and white adipose tissue, cerebellum, duodenum and heart.

Its subcellular location is the cell membrane. Functionally, G-protein coupled receptor for glucagon that plays a central role in the regulation of blood glucose levels and glucose homeostasis. Regulates the rate of hepatic glucose production by promoting glycogen hydrolysis and gluconeogenesis. Plays an important role in mediating the responses to fasting. Ligand binding causes a conformation change that triggers signaling via guanine nucleotide-binding proteins (G proteins) and modulates the activity of down-stream effectors, such as adenylate cyclase. Promotes activation of adenylate cyclase. Besides, plays a role in signaling via a phosphatidylinositol-calcium second messenger system. This is Glucagon receptor (Gcgr) from Mus musculus (Mouse).